The sequence spans 384 residues: 8-amino-7-oxononanoate synthase (384 aa).

R21 is a binding site for substrate. A pyridoxal 5'-phosphate-binding site is contributed by 108 to 109 (GF). Position 133 (H133) interacts with substrate. Residues S179, H207, and T233 each coordinate pyridoxal 5'-phosphate. K236 carries the N6-(pyridoxal phosphate)lysine modification. T350 contacts substrate.

It belongs to the class-II pyridoxal-phosphate-dependent aminotransferase family. BioF subfamily. Homodimer. Pyridoxal 5'-phosphate serves as cofactor.

It carries out the reaction 6-carboxyhexanoyl-[ACP] + L-alanine + H(+) = (8S)-8-amino-7-oxononanoate + holo-[ACP] + CO2. It participates in cofactor biosynthesis; biotin biosynthesis. Functionally, catalyzes the decarboxylative condensation of pimeloyl-[acyl-carrier protein] and L-alanine to produce 8-amino-7-oxononanoate (AON), [acyl-carrier protein], and carbon dioxide. The chain is 8-amino-7-oxononanoate synthase from Erwinia tasmaniensis (strain DSM 17950 / CFBP 7177 / CIP 109463 / NCPPB 4357 / Et1/99).